Reading from the N-terminus, the 473-residue chain is Aspartyl/glutamyl-tRNA(Asn/Gln) amidotransferase subunit B (473 aa).

This sequence belongs to the GatB/GatE family. GatB subfamily. In terms of assembly, heterotrimer of A, B and C subunits.

The enzyme catalyses L-glutamyl-tRNA(Gln) + L-glutamine + ATP + H2O = L-glutaminyl-tRNA(Gln) + L-glutamate + ADP + phosphate + H(+). The catalysed reaction is L-aspartyl-tRNA(Asn) + L-glutamine + ATP + H2O = L-asparaginyl-tRNA(Asn) + L-glutamate + ADP + phosphate + 2 H(+). Functionally, allows the formation of correctly charged Asn-tRNA(Asn) or Gln-tRNA(Gln) through the transamidation of misacylated Asp-tRNA(Asn) or Glu-tRNA(Gln) in organisms which lack either or both of asparaginyl-tRNA or glutaminyl-tRNA synthetases. The reaction takes place in the presence of glutamine and ATP through an activated phospho-Asp-tRNA(Asn) or phospho-Glu-tRNA(Gln). The chain is Aspartyl/glutamyl-tRNA(Asn/Gln) amidotransferase subunit B from Wolbachia sp. subsp. Drosophila simulans (strain wRi).